Here is a 354-residue protein sequence, read N- to C-terminus: MDNERRLVLLTGATGHVGFAVLVEALEAEYNVRVVLREISKADSILSSEPVKNALSSTAAPELSFVEVPDMTVPGAFDSAMQSVTYVVHCASPINRGKFRDFQTELIDPAVKGTTNILKAAHATPSVLRVVITSSNSAIVNHNILPAPGTCVSPSDRQPDYPLDVAMHDADEAYSAAKTSALNATDTFVSSANDLRFDVVSIMPTFVFGPKELAKSPGDIIDGSNVFGIGLVLIKQSWGSLRIEAVSCHIDDVAQAHVQALNHDEDVQFPFKAGTHRSCLLASSFRPDEVRDIVEREFPKESWQGEEAVFRGKGSYAWYHTDYDVSAAEKLLGRKLKGIVEQIRSSGLQVLRIA.

NADP(+) contacts are provided by K41 and Y174.

It belongs to the NAD(P)-dependent epimerase/dehydratase family. Dihydroflavonol-4-reductase subfamily.

It functions in the pathway mycotoxin biosynthesis. Functionally, NAD-dependent epimerase/dehydratase; part of the gene cluster that mediates the biosynthesis of the host-selective toxins (HSTs) AAL-toxins, sphinganine-analog mycotoxins responsible for Alternaria stem canker on tomato by the tomato pathotype. The biosynthesis starts with the polyketide synthase ALT1-catalyzed C-16 carbon chain assembly from one starter acetyl-CoA unit with malonyl-CoA extender units. ALT1 also selectively transfers methyl groups at the first and the third cycle of chain elongation for AAL toxin. The C-16 polyketide chain is released from the enzyme by a nucleophilic attack of a carbanion, which is derived from R-carbon of glycin by decarboxylation, on the carbonyl carbon of polyketide acyl chain. This step is probably catalyzed by a pyridoxal 5'-phosphate-dependent aminoacyl transferase ALT4. The respective functions of the other enzymes encoded by the cluster have still to be elucidated. The sphingosine N-acyltransferase-like protein ALT7 seems not to act as a resistance/self-tolerance factor against the toxin in the toxin biosynthetic gene cluster, contrary to what is expected. The sequence is that of NAD-dependent epimerase/dehydratase ALT6 from Alternaria alternata (Alternaria rot fungus).